A 276-amino-acid polypeptide reads, in one-letter code: MKNTTETFKNSKFKKEKLVMLTAYDYSTAKIIDSCDINGILVGDSLGMVCLGYENTLSVTMEDMIHHTKAVVRGAKSTLIVADLPFMSYQTSVYDAVFNAGRLVKEAGATAIKLEGGALVCDRIKAIVDAQIPVMGHIGLTPQSVNAFGGFKIQGKNISKAKELIEDAKKIEAAGAFAITLEGIPEKLAKIITESITIPTIGIGAGKHCDGQILVYQDMLGMFSDLAPKFVKRYGNIGDDMKEAFNSYAKEVREGTFPDEAHSFKIDQSIIDEITK.

Mg(2+) is bound by residues D44 and D83. Residues 44 to 45 (DS), D83, and K113 each bind 3-methyl-2-oxobutanoate. A Mg(2+)-binding site is contributed by E115. E182 (proton acceptor) is an active-site residue.

Belongs to the PanB family. In terms of assembly, homodecamer; pentamer of dimers. Mg(2+) is required as a cofactor.

The protein localises to the cytoplasm. It catalyses the reaction 3-methyl-2-oxobutanoate + (6R)-5,10-methylene-5,6,7,8-tetrahydrofolate + H2O = 2-dehydropantoate + (6S)-5,6,7,8-tetrahydrofolate. It participates in cofactor biosynthesis; (R)-pantothenate biosynthesis; (R)-pantoate from 3-methyl-2-oxobutanoate: step 1/2. In terms of biological role, catalyzes the reversible reaction in which hydroxymethyl group from 5,10-methylenetetrahydrofolate is transferred onto alpha-ketoisovalerate to form ketopantoate. The chain is 3-methyl-2-oxobutanoate hydroxymethyltransferase from Clostridium acetobutylicum (strain ATCC 824 / DSM 792 / JCM 1419 / IAM 19013 / LMG 5710 / NBRC 13948 / NRRL B-527 / VKM B-1787 / 2291 / W).